Reading from the N-terminus, the 666-residue chain is UvrABC system protein B (666 aa).

Residues 28–171 (NNINQGIQRQ…YLHVGELIEF (144 aa)) form the Helicase ATP-binding domain. 41 to 48 (GATGTGKT) serves as a coordination point for ATP. The short motif at 94 to 117 (YFDYYQPEAYKPITDTYIEKDSVT) is the Beta-hairpin element. Residues 436–598 (QIDDLINELM…IIPKTIIKPI (163 aa)) form the Helicase C-terminal domain. One can recognise a UVR domain in the interval 624 to 659 (NQKIKELKKKMEEAAKKREYEVAAQYRDMIVELEAI).

This sequence belongs to the UvrB family. In terms of assembly, forms a heterotetramer with UvrA during the search for lesions. Interacts with UvrC in an incision complex.

It is found in the cytoplasm. The UvrABC repair system catalyzes the recognition and processing of DNA lesions. A damage recognition complex composed of 2 UvrA and 2 UvrB subunits scans DNA for abnormalities. Upon binding of the UvrA(2)B(2) complex to a putative damaged site, the DNA wraps around one UvrB monomer. DNA wrap is dependent on ATP binding by UvrB and probably causes local melting of the DNA helix, facilitating insertion of UvrB beta-hairpin between the DNA strands. Then UvrB probes one DNA strand for the presence of a lesion. If a lesion is found the UvrA subunits dissociate and the UvrB-DNA preincision complex is formed. This complex is subsequently bound by UvrC and the second UvrB is released. If no lesion is found, the DNA wraps around the other UvrB subunit that will check the other stand for damage. The sequence is that of UvrABC system protein B from Ureaplasma parvum serovar 3 (strain ATCC 27815 / 27 / NCTC 11736).